The following is a 357-amino-acid chain: NAD kinase 1 (357 aa).

Asp-68 functions as the Proton acceptor in the catalytic mechanism. NAD(+)-binding positions include 68-69 (DG), Arg-73, 175-176 (ND), Arg-186, Asp-205, Ala-240, and Gln-275.

It belongs to the NAD kinase family. Requires a divalent metal cation as cofactor.

It is found in the cytoplasm. The catalysed reaction is NAD(+) + ATP = ADP + NADP(+) + H(+). In terms of biological role, involved in the regulation of the intracellular balance of NAD and NADP, and is a key enzyme in the biosynthesis of NADP. Catalyzes specifically the phosphorylation on 2'-hydroxyl of the adenosine moiety of NAD to yield NADP. The chain is NAD kinase 1 from Streptomyces avermitilis (strain ATCC 31267 / DSM 46492 / JCM 5070 / NBRC 14893 / NCIMB 12804 / NRRL 8165 / MA-4680).